The chain runs to 394 residues: Carbamoyl phosphate synthase small chain (394 aa).

The tract at residues 1–188 (MIRKERAILA…ALPYAFPTLR (188 aa)) is CPSase. The L-glutamine site is built by Ser-49, Gly-240, and Gly-242. Residues 192 to 379 (RVVLMDFGIK…IEEIDAFDGG (188 aa)) form the Glutamine amidotransferase type-1 domain. Cys-267 acts as the Nucleophile in catalysis. Residues Leu-268, Gln-271, Asn-309, Gly-311, and Tyr-312 each contribute to the L-glutamine site. Residues His-352 and Glu-354 contribute to the active site.

The protein belongs to the CarA family. In terms of assembly, composed of two chains; the small (or glutamine) chain promotes the hydrolysis of glutamine to ammonia, which is used by the large (or ammonia) chain to synthesize carbamoyl phosphate. Tetramer of heterodimers (alpha,beta)4.

The enzyme catalyses hydrogencarbonate + L-glutamine + 2 ATP + H2O = carbamoyl phosphate + L-glutamate + 2 ADP + phosphate + 2 H(+). It catalyses the reaction L-glutamine + H2O = L-glutamate + NH4(+). It participates in amino-acid biosynthesis; L-arginine biosynthesis; carbamoyl phosphate from bicarbonate: step 1/1. The protein operates within pyrimidine metabolism; UMP biosynthesis via de novo pathway; (S)-dihydroorotate from bicarbonate: step 1/3. Functionally, small subunit of the glutamine-dependent carbamoyl phosphate synthetase (CPSase). CPSase catalyzes the formation of carbamoyl phosphate from the ammonia moiety of glutamine, carbonate, and phosphate donated by ATP, constituting the first step of 2 biosynthetic pathways, one leading to arginine and/or urea and the other to pyrimidine nucleotides. The small subunit (glutamine amidotransferase) binds and cleaves glutamine to supply the large subunit with the substrate ammonia. This chain is Carbamoyl phosphate synthase small chain, found in Deinococcus radiodurans (strain ATCC 13939 / DSM 20539 / JCM 16871 / CCUG 27074 / LMG 4051 / NBRC 15346 / NCIMB 9279 / VKM B-1422 / R1).